We begin with the raw amino-acid sequence, 347 residues long: Probable inactive UDP-arabinopyranose mutase 2 (347 aa).

N-linked (Glc...) arginine glycosylation is present at R145.

This sequence belongs to the RGP family. As to quaternary structure, heteromers with UAM1 and UAM3. Is not reversibly glycosylated in vitro by UDP-glucose, UDP-xylose and UDP-galactose.

The protein localises to the golgi apparatus. In terms of biological role, probable inactive UDP-L-arabinose mutase. Inactive in vitro, but associates with UAM1 and UAM3. The chain is Probable inactive UDP-arabinopyranose mutase 2 from Oryza sativa subsp. japonica (Rice).